We begin with the raw amino-acid sequence, 354 residues long: Trans-3-hydroxy-L-proline dehydratase (354 aa).

The Proton acceptor role is filled by Cys104. Substrate is bound by residues 105–106, Asp269, and 274–275; these read GH and GS.

Belongs to the proline racemase family. In terms of assembly, homodimer. In terms of tissue distribution, ubiquitously expressed.

It carries out the reaction trans-3-hydroxy-L-proline = 1-pyrroline-2-carboxylate + H2O. Functionally, catalyzes the dehydration of trans-3-hydroxy-L-proline to Delta(1)-pyrroline-2-carboxylate (Pyr2C). May be required to degrade trans-3-hydroxy-L-proline from the diet and originating from the degradation of proteins such as collagen-IV that contain it. The polypeptide is Trans-3-hydroxy-L-proline dehydratase (L3HYPDH) (Homo sapiens (Human)).